Consider the following 671-residue polypeptide: UvrABC system protein B (671 aa).

A Helicase ATP-binding domain is found at 35 to 423 (KAIIENKKHQ…NHQVVQQIIR (389 aa)). ATP is bound at residue 48-55 (GATGTGKT). The Beta-hairpin motif lies at 101-124 (NFDFFQPEAYIPSKDLYIDKDSRQ). Positions 440–602 (QIDDIINEIH…IVPKTISKAI (163 aa)) constitute a Helicase C-terminal domain. Residues 632–667 (QQTIDNLRQEMLQAAKELDFERAAILRDTIIELENE) enclose the UVR domain.

The protein belongs to the UvrB family. As to quaternary structure, forms a heterotetramer with UvrA during the search for lesions. Interacts with UvrC in an incision complex.

Its subcellular location is the cytoplasm. The UvrABC repair system catalyzes the recognition and processing of DNA lesions. A damage recognition complex composed of 2 UvrA and 2 UvrB subunits scans DNA for abnormalities. Upon binding of the UvrA(2)B(2) complex to a putative damaged site, the DNA wraps around one UvrB monomer. DNA wrap is dependent on ATP binding by UvrB and probably causes local melting of the DNA helix, facilitating insertion of UvrB beta-hairpin between the DNA strands. Then UvrB probes one DNA strand for the presence of a lesion. If a lesion is found the UvrA subunits dissociate and the UvrB-DNA preincision complex is formed. This complex is subsequently bound by UvrC and the second UvrB is released. If no lesion is found, the DNA wraps around the other UvrB subunit that will check the other stand for damage. In Mycoplasma mycoides subsp. mycoides SC (strain CCUG 32753 / NCTC 10114 / PG1), this protein is UvrABC system protein B.